We begin with the raw amino-acid sequence, 395 residues long: Putative transport protein sll0063 (395 aa).

8 helical membrane-spanning segments follow: residues leucine 24–alanine 44, isoleucine 50–leucine 70, phenylalanine 91–alanine 111, valine 180–leucine 200, alanine 245–leucine 265, valine 269–alanine 289, methionine 295–alanine 315, and phenylalanine 328–valine 348.

This sequence belongs to the autoinducer-2 exporter (AI-2E) (TC 2.A.86) family.

Its subcellular location is the cell membrane. The protein is Putative transport protein sll0063 of Synechocystis sp. (strain ATCC 27184 / PCC 6803 / Kazusa).